A 607-amino-acid chain; its full sequence is ATP-dependent RNA helicase-like protein DB10 (607 aa).

The segment covering 1 to 10 has biased composition (polar residues); that stretch reads MAVVTASSAG. Disordered regions lie at residues 1-25 and 66-108; these read MAVVTASSAGPSYAPEDPTLPKPWK and VFVS…DGTS. One can recognise a WW domain in the interval 18 to 52; the sequence is PTLPKPWKGLVDGTTGFIYFWNPETNDTQYERPVP. Over residues 89 to 98 the composition is skewed to polar residues; that stretch reads RGSNNKIARS. Over residues 99–108 the composition is skewed to basic and acidic residues; sequence SSDRFHDGTS. Positions 145–173 match the Q motif motif; that stretch reads TSFEATGFPSEIVREMHQAGFSAPTPIQA. The 175-residue stretch at 176–350 folds into the Helicase ATP-binding domain; the sequence is WPIALQGRDI…ADLLVNSVQV (175 aa). 189-196 contributes to the ATP binding site; sequence AKTGSGKT. The short motif at 298–301 is the DEAD box element; the sequence is DEAD. The region spanning 379–523 is the Helicase C-terminal domain; it reads RVEQILRSKE…CVPTELRDMA (145 aa). A disordered region spans residues 519 to 607; sequence LRDMASRGGG…WSGKKSRFTD (89 aa). The segment covering 538–548 has biased composition (gly residues); that stretch reads SGPGGRGGRGG. Over residues 562–574 the composition is skewed to basic and acidic residues; sequence GYDRGSRDSDRYG.

This sequence belongs to the DEAD box helicase family.

It catalyses the reaction ATP + H2O = ADP + phosphate + H(+). This chain is ATP-dependent RNA helicase-like protein DB10, found in Nicotiana sylvestris (Wood tobacco).